The following is a 224-amino-acid chain: Adenylate kinase (224 aa).

Residue 10-15 (GSGKST) participates in ATP binding. Residues 30 to 59 (ASGDIIRAEINKGNALGREMKKYIEKGDLL) form an NMP region. AMP is bound by residues Ser-31, Arg-36, 57 to 59 (DLL), 83 to 86 (GYPR), and Gln-90. The tract at residues 124–161 (GRRICRQCGAVYHIKYNPSKVPGKCDICGGEVIQREDD) is LID. Arg-125 contacts ATP. Zn(2+)-binding residues include Cys-128 and Cys-131. An ATP-binding site is contributed by 134–135 (VY). Zn(2+) contacts are provided by Cys-148 and Cys-151. AMP is bound by residues Arg-158 and Arg-169. Gly-197 is an ATP binding site.

The protein belongs to the adenylate kinase family. Monomer.

The protein localises to the cytoplasm. The catalysed reaction is AMP + ATP = 2 ADP. The protein operates within purine metabolism; AMP biosynthesis via salvage pathway; AMP from ADP: step 1/1. Functionally, catalyzes the reversible transfer of the terminal phosphate group between ATP and AMP. Plays an important role in cellular energy homeostasis and in adenine nucleotide metabolism. The protein is Adenylate kinase of Thermococcus sibiricus (strain DSM 12597 / MM 739).